A 173-amino-acid polypeptide reads, in one-letter code: Protein SUGARY ENHANCER 1 (173 aa).

Residues 1–31 (MIRPAPWVGAGHRGRGGEAGACTESLGSESG) are disordered.

This sequence belongs to the fantastic four family.

Involved in starch metabolism in endosperm. Acts as a modifier of SUGARY1 (SU1), an isoamylase starch-debranching enzyme involved in amylopectin biosynthesis in endosperm. In Zea mays (Maize), this protein is Protein SUGARY ENHANCER 1.